The following is a 211-amino-acid chain: Thiamine-phosphate synthase (211 aa).

4-amino-2-methyl-5-(diphosphooxymethyl)pyrimidine contacts are provided by residues 37-41 (QLRIK) and asparagine 69. Mg(2+) contacts are provided by aspartate 70 and aspartate 89. Position 108 (serine 108) interacts with 4-amino-2-methyl-5-(diphosphooxymethyl)pyrimidine. 134–136 (TQT) is a binding site for 2-[(2R,5Z)-2-carboxy-4-methylthiazol-5(2H)-ylidene]ethyl phosphate. Residue lysine 137 coordinates 4-amino-2-methyl-5-(diphosphooxymethyl)pyrimidine. Residues glycine 166 and 186 to 187 (VS) each bind 2-[(2R,5Z)-2-carboxy-4-methylthiazol-5(2H)-ylidene]ethyl phosphate.

It belongs to the thiamine-phosphate synthase family. Mg(2+) is required as a cofactor.

It carries out the reaction 2-[(2R,5Z)-2-carboxy-4-methylthiazol-5(2H)-ylidene]ethyl phosphate + 4-amino-2-methyl-5-(diphosphooxymethyl)pyrimidine + 2 H(+) = thiamine phosphate + CO2 + diphosphate. The enzyme catalyses 2-(2-carboxy-4-methylthiazol-5-yl)ethyl phosphate + 4-amino-2-methyl-5-(diphosphooxymethyl)pyrimidine + 2 H(+) = thiamine phosphate + CO2 + diphosphate. It catalyses the reaction 4-methyl-5-(2-phosphooxyethyl)-thiazole + 4-amino-2-methyl-5-(diphosphooxymethyl)pyrimidine + H(+) = thiamine phosphate + diphosphate. Its pathway is cofactor biosynthesis; thiamine diphosphate biosynthesis; thiamine phosphate from 4-amino-2-methyl-5-diphosphomethylpyrimidine and 4-methyl-5-(2-phosphoethyl)-thiazole: step 1/1. Condenses 4-methyl-5-(beta-hydroxyethyl)thiazole monophosphate (THZ-P) and 2-methyl-4-amino-5-hydroxymethyl pyrimidine pyrophosphate (HMP-PP) to form thiamine monophosphate (TMP). In Escherichia coli O9:H4 (strain HS), this protein is Thiamine-phosphate synthase.